Here is a 325-residue protein sequence, read N- to C-terminus: mRNA decay activator protein ZFP36 (325 aa).

The necessary for nuclear export stretch occupies residues 1–15; that stretch reads MDLAAIYKSLLSLSP. Positions 1–98 are necessary and sufficient for the association with mRNA decay enzymes and mRNA decay activation; it reads MDLAAIYKSL…PTSPTATPTT (98 aa). 2 necessary for localization of ARE-containing mRNAs to processing bodies (PBs) regions span residues 1–172 and 98–325; these read MDLA…DLAA and TSSR…SVSE. The segment covering 15 to 48 has biased composition (low complexity); the sequence is PELPSDLGETESSTSWASSGPWSLSSSDSSLPEA. Residues 15–101 form a disordered region; that stretch reads PELPSDLGET…PTATPTTSSR (87 aa). The residue at position 58 (Ser58) is a Phosphoserine; by MAPKAPK2. Position 64 is a phosphoserine (Ser64). One copy of the P-P-P-P-G repeat lies at 69–73; it reads PPPPG. Low complexity predominate over residues 75-101; it reads APLAPRPSSELSPSPTSPTATPTTSSR. A phosphoserine mark is found at Ser86 and Ser88. Phosphothreonine is present on Thr90. Position 91 is a phosphoserine (Ser91). The interval 93–166 is necessary for nuclear localization; that stretch reads TATPTTSSRY…GSRCHFIHNP (74 aa). The tract at residues 95–171 is necessary for RNA-binding; it reads TPTTSSRYKT…FIHNPSEDLA (77 aa). 2 C3H1-type zinc fingers span residues 101 to 129 and 139 to 167; these read RYKT…HGLG and KYKT…HNPS. The interval 101–192 is necessary for interaction with PABPN1; sequence RYKTELCRTF…ISFSGLPSGR (92 aa). At Ser167 the chain carries Phosphoserine. Positions 172 to 325 are necessary for mRNA decay activation; that stretch reads APGHPHVLRQ…PIFNRISVSE (154 aa). At Ser184 the chain carries Phosphoserine; by MAPKAPK2. Disordered stretches follow at residues 185–248 and 260–325; these read FSGL…TPAC and VWGP…SVSE. Ser195 bears the Phosphoserine mark. A P-P-P-P-G repeat occupies 196 to 200; it reads PPPAS. Residues 204–214 show a composition bias toward low complexity; the sequence is PSVPSWSFSPS. Ser216 carries the phosphoserine modification. One copy of the P-P-P-P-G repeat lies at 217-222; that stretch reads PPPPPG. At Ser227 the chain carries Phosphoserine; by MAPK1; in vitro. 3 positions are modified to phosphoserine: Ser275, Ser295, and Ser322. Over residues 285-295 the composition is skewed to low complexity; the sequence is SSGSSLGGSDS. The segment at 311 to 325 is interaction with CNOT1; sequence APRRLPIFNRISVSE.

Associates with cytoplasmic CCR4-NOT and PAN2-PAN3 deadenylase complexes to trigger ARE-containing mRNA deadenylation and decay processes. Part of a mRNA decay activation complex at least composed of poly(A)-specific exoribonucleases CNOT6, EXOSC2 and XRN1 and mRNA-decapping enzymes DCP1A and DCP2. Associates with the RNA exosome complex. Interacts (via phosphorylated form) with 14-3-3 proteins; these interactions promote exclusion of ZFP36 from cytoplasmic stress granules in response to arsenite treatment in a MAPKAPK2-dependent manner and does not prevent CCR4-NOT deadenylase complex recruitment or ZFP36-induced ARE-containing mRNA deadenylation and decay processes. Interacts with 14-3-3 proteins; these interactions occur in response to rapamycin in an Akt-dependent manner. Interacts with AGO2 and AGO4. Interacts (via C-terminus) with CNOT1; this interaction occurs in a RNA-independent manner and induces mRNA deadenylation. Interacts (via N-terminus) with CNOT6. Interacts with CNOT6L. Interacts (via C-terminus) with CNOT7; this interaction occurs in a RNA-independent manner, induces mRNA deadenylation and is inhibited in a phosphorylation MAPKAPK2-dependent manner. Interacts (via unphosphorylated form) with CNOT8; this interaction occurs in a RNA-independent manner and is inhibited in a phosphorylation MAPKAPK2-dependent manner. Interacts with DCP1A. Interacts (via N-terminus) with DCP2. Interacts with EDC3. Interacts (via N-terminus) with EXOSC2. Interacts with heat shock 70 kDa proteins. Interacts with KHSRP; this interaction increases upon cytokine-induced treatment. Interacts with MAP3K4; this interaction enhances the association with SH3KBP1/CIN85. Interacts with MAPKAPK2; this interaction occurs upon skeletal muscle satellite cell activation. Interacts with NCL. Interacts with NUP214; this interaction increases upon lipopolysaccharide (LPS) stimulation. Interacts with PABPC1; this interaction occurs in a RNA-dependent manner. Interacts (via hypophosphorylated form) with PABPN1 (via RRM domain and C-terminal arginine-rich region); this interaction occurs in the nucleus in a RNA-independent manner, decreases in presence of single-stranded poly(A) RNA-oligomer and in a p38 MAPK-dependent-manner and inhibits nuclear poly(A) tail synthesis. Interacts with PAN2. Interacts (via C3H1-type zinc finger domains) with PKM. Interacts (via C3H1-type zinc finger domains) with nuclear RNA poly(A) polymerase. Interacts with PPP2CA; this interaction occurs in LPS-stimulated cells and induces ZFP36 dephosphorylation, and hence may promote ARE-containing mRNAs decay. Interacts (via C-terminus) with PRR5L (via C-terminus); this interaction may accelerate ZFP36-mediated mRNA decay during stress. Interacts (via C-terminus) with SFN; this interaction occurs in a phosphorylation-dependent manner. Interacts (via extreme C-terminal region) with SH3KBP1/CIN85 (via SH3 domains); this interaction enhances MAP3K4-induced phosphorylation of ZFP36 at Ser-64 and Ser-91 and does not alter neither ZFP36 binding to ARE-containing transcripts nor TNF-alpha mRNA decay. Interacts with XRN1. Interacts (via C-terminus and Ser-184 phosphorylated form) with YWHAB; this interaction occurs in a p38/MAPKAPK2-dependent manner, increases cytoplasmic localization of ZFP36 and protects ZFP36 from Ser-184 dephosphorylation by serine/threonine phosphatase 2A, and hence may be crucial for stabilizing ARE-containing mRNAs. Interacts (via phosphorylated form) with YWHAE. Interacts (via C-terminus) with YWHAG; this interaction occurs in a phosphorylation-dependent manner. Interacts with YWHAH; this interaction occurs in a phosphorylation-dependent manner. Interacts with YWHAQ; this interaction occurs in a phosphorylation-dependent manner. Interacts with (via C-terminus) YWHAZ; this interaction occurs in a phosphorylation-dependent manner. Does not interact with SH3KBP1. Interacts (via P-P-P-P-G repeats) with GIGYF2; the interaction is direct. In terms of processing, phosphorylated. Phosphorylation at serine and/or threonine residues occurs in a p38 MAPK- and MAPKAPK2-dependent manner. Phosphorylated by MAPKAPK2 at Ser-58 and Ser-184; phosphorylation increases its stability and cytoplasmic localization, promotes binding to 14-3-3 adapter proteins and inhibits the recruitment of cytoplasmic CCR4-NOT and PAN2-PAN3 deadenylase complexes to the mRNA decay machinery, thereby inhibiting ZFP36-induced ARE-containing mRNA deadenylation and decay processes. Phosphorylation by MAPKAPK2 does not impair ARE-containing RNA-binding. Phosphorylated in a MAPKAPK2- and p38 MAPK-dependent manner upon skeletal muscle satellite cell activation; this phosphorylation inhibits ZFP36-mediated mRNA decay activity, and hence stabilizes MYOD1 mRNA. Phosphorylated by MAPK1 upon mitogen stimulation. Phosphorylated at Ser-64 and Ser-91; these phosphorylations increase in a SH3KBP1-dependent manner. Phosphorylated at serine and threonine residues in a pyruvate kinase PKM- and p38 MAPK-dependent manner. Phosphorylation at Ser-58 may participate in the PKM-mediated degradation of ZFP36 in a p38 MAPK-dependent manner. Dephosphorylated by serine/threonine phosphatase 2A at Ser-184. Post-translationally, ubiquitinated; pyruvate kinase (PKM)-dependent ubiquitination leads to proteasomal degradation through a p38 MAPK signaling pathway.

It localises to the nucleus. The protein resides in the cytoplasm. Its subcellular location is the cytoplasmic granule. It is found in the P-body. Zinc-finger RNA-binding protein that destabilizes numerous cytoplasmic AU-rich element (ARE)-containing mRNA transcripts by promoting their poly(A) tail removal or deadenylation, and hence provide a mechanism for attenuating protein synthesis. Acts as an 3'-untranslated region (UTR) ARE mRNA-binding adapter protein to communicate signaling events to the mRNA decay machinery. Recruits deadenylase CNOT7 (and probably the CCR4-NOT complex) via association with CNOT1, and hence promotes ARE-mediated mRNA deadenylation. Also functions by recruiting components of the cytoplasmic RNA decay machinery to the bound ARE-containing mRNAs. Self regulates by destabilizing its own mRNA. Binds to 3'-UTR ARE of numerous mRNAs. Also binds to ARE of its own mRNA. Plays a role in anti-inflammatory responses; suppresses tumor necrosis factor (TNF)-alpha production by stimulating ARE-mediated TNF-alpha mRNA decay and several other inflammatory ARE-containing mRNAs in interferon (IFN)- and/or lipopolysaccharide (LPS)-induced macrophages. Also plays a role in the regulation of dendritic cell maturation at the post-transcriptional level, and hence operates as part of a negative feedback loop to limit the inflammatory response. Promotes ARE-mediated mRNA decay of hypoxia-inducible factor HIF1A mRNA during the response of endothelial cells to hypoxia. Positively regulates early adipogenesis of preadipocytes by promoting ARE-mediated mRNA decay of immediate early genes (IEGs). Negatively regulates hematopoietic/erythroid cell differentiation by promoting ARE-mediated mRNA decay of the transcription factor STAT5B mRNA. Plays a role in maintaining skeletal muscle satellite cell quiescence by promoting ARE-mediated mRNA decay of the myogenic determination factor MYOD1 mRNA. Also associates with and regulates the expression of non-ARE-containing target mRNAs at the post-transcriptional level, such as MHC class I mRNAs. Participates in association with argonaute RISC catalytic components in the ARE-mediated mRNA decay mechanism; assists microRNA (miRNA) targeting ARE-containing mRNAs. May also play a role in the regulation of cytoplasmic mRNA decapping; enhances decapping of ARE-containing RNAs, in vitro. Involved in the delivery of target ARE-mRNAs to processing bodies (PBs). In addition to its cytosolic mRNA-decay function, affects nuclear pre-mRNA processing. Negatively regulates nuclear poly(A)-binding protein PABPN1-stimulated polyadenylation activity on ARE-containing pre-mRNA during LPS-stimulated macrophages. Also involved in the regulation of stress granule (SG) and P-body (PB) formation and fusion. Plays a role in the regulation of keratinocyte proliferation, differentiation and apoptosis. Plays a role as a tumor suppressor by inhibiting cell proliferation in breast cancer cells. The chain is mRNA decay activator protein ZFP36 from Ovis aries (Sheep).